Reading from the N-terminus, the 309-residue chain is Fructosamine-3-kinase (309 aa).

Position 1 is an N-acetylmethionine (Met-1). ATP is bound at residue 89–91 (EHL). Asp-217 acts as the Proton acceptor in catalysis.

This sequence belongs to the fructosamine kinase family. In terms of assembly, monomer. In terms of tissue distribution, widely expressed. Expressed in erythrocytes.

The enzyme catalyses N(6)-(D-fructosyl)-L-lysyl-[protein] + ATP = N(6)-(3-O-phospho-D-fructosyl)-L-lysyl-[protein] + ADP + H(+). It catalyses the reaction N(6)-D-ribulosyl-L-lysyl-[protein] + ATP = N(6)-(3-O-phospho-D-ribulosyl)-L-lysyl-[protein] + ADP + H(+). The catalysed reaction is N(6)-(D-psicosyl)-L-lysyl-[protein] + ATP = N(6)-(3-O-phospho-D-psicosyl)-L-lysyl-[protein] + ADP + H(+). Its function is as follows. Fructosamine-3-kinase involved in protein deglycation by mediating phosphorylation of fructoselysine residues on glycated proteins, to generate fructoselysine-3 phosphate. Fructoselysine-3 phosphate adducts are unstable and decompose under physiological conditions. Involved in intracellular deglycation in erythrocytes. Involved in the response to oxidative stress by mediating deglycation of NFE2L2/NRF2, glycation impairing NFE2L2/NRF2 function. Also able to phosphorylate psicosamines and ribulosamines. The chain is Fructosamine-3-kinase from Homo sapiens (Human).